A 376-amino-acid chain; its full sequence is Ribonucleoside-diphosphate reductase 1 subunit beta (376 aa).

The Fe cation site is built by aspartate 85, glutamate 116, and histidine 119. Tyrosine 123 is a catalytic residue. 3 residues coordinate Fe cation: glutamate 205, glutamate 239, and histidine 242.

The protein belongs to the ribonucleoside diphosphate reductase small chain family. As to quaternary structure, tetramer of two alpha (R1) and two beta (R2) subunits. The B1 protein is a dimer of alpha subunits. A radical transfer pathway occurs between Tyr-123 of R2 and R1. Requires Fe cation as cofactor.

The enzyme catalyses a 2'-deoxyribonucleoside 5'-diphosphate + [thioredoxin]-disulfide + H2O = a ribonucleoside 5'-diphosphate + [thioredoxin]-dithiol. In terms of biological role, provides the precursors necessary for DNA synthesis. Catalyzes the biosynthesis of deoxyribonucleotides from the corresponding ribonucleotides. R2 contains the tyrosyl radical required for catalysis. In Escherichia coli O157:H7, this protein is Ribonucleoside-diphosphate reductase 1 subunit beta (nrdB).